Here is a 673-residue protein sequence, read N- to C-terminus: DNA ligase (673 aa).

NAD(+) is bound by residues 33–37 (DAEYD), 82–83 (SL), and glutamate 115. Catalysis depends on lysine 117, which acts as the N6-AMP-lysine intermediate. NAD(+) contacts are provided by arginine 138, glutamate 175, lysine 292, and lysine 316. Zn(2+) is bound by residues cysteine 410, cysteine 413, cysteine 428, and cysteine 434. A BRCT domain is found at 593–673 (VGDNPFKEKT…TFLAWSKPYL (81 aa)).

The protein belongs to the NAD-dependent DNA ligase family. LigA subfamily. The cofactor is Mg(2+). It depends on Mn(2+) as a cofactor.

It carries out the reaction NAD(+) + (deoxyribonucleotide)n-3'-hydroxyl + 5'-phospho-(deoxyribonucleotide)m = (deoxyribonucleotide)n+m + AMP + beta-nicotinamide D-nucleotide.. DNA ligase that catalyzes the formation of phosphodiester linkages between 5'-phosphoryl and 3'-hydroxyl groups in double-stranded DNA using NAD as a coenzyme and as the energy source for the reaction. It is essential for DNA replication and repair of damaged DNA. This chain is DNA ligase, found in Pasteurella multocida (strain Pm70).